The chain runs to 646 residues: Phosphomethylpyrimidine synthase (646 aa).

Residues 1–13 are compositionally biased toward polar residues; it reads MNIRSNPDTTRPA. Positions 1–30 are disordered; the sequence is MNIRSNPDTTRPAVTTGALPSSRKMFSAPD. Substrate is bound by residues N221, M250, Y279, H315, 335–337, 376–379, and E415; these read SRG and DGLR. Zn(2+) is bound at residue H419. Y442 contacts substrate. Zn(2+) is bound at residue H483. [4Fe-4S] cluster-binding residues include C563, C566, and C571.

Belongs to the ThiC family. As to quaternary structure, homodimer. The cofactor is [4Fe-4S] cluster.

It carries out the reaction 5-amino-1-(5-phospho-beta-D-ribosyl)imidazole + S-adenosyl-L-methionine = 4-amino-2-methyl-5-(phosphooxymethyl)pyrimidine + CO + 5'-deoxyadenosine + formate + L-methionine + 3 H(+). The protein operates within cofactor biosynthesis; thiamine diphosphate biosynthesis. Its function is as follows. Catalyzes the synthesis of the hydroxymethylpyrimidine phosphate (HMP-P) moiety of thiamine from aminoimidazole ribotide (AIR) in a radical S-adenosyl-L-methionine (SAM)-dependent reaction. The chain is Phosphomethylpyrimidine synthase from Nitrobacter winogradskyi (strain ATCC 25391 / DSM 10237 / CIP 104748 / NCIMB 11846 / Nb-255).